The primary structure comprises 790 residues: DNA topoisomerase 1 (790 aa).

Composition is skewed to polar residues over residues 1–18 (MKSN…SNVM), 44–54 (KLSSGALNGNS), and 61–70 (SNLSCPSPYT). Positions 1-196 (MKSNPGITVI…KKRPDVSASV (196 aa)) are disordered. Over residues 158 to 167 (QEEAAADDDP) the composition is skewed to acidic residues. The span at 168–181 (SISNRNKKSTTPAS) shows a compositional bias: polar residues. 3 interaction with DNA regions span residues 426 to 427 (KY), 490 to 495 (RAGNEK), and 581 to 583 (TAK). Residues 433–790 (SSSLKGKVTR…AMDVVLIFRF (358 aa)) enclose the Topo IB-type catalytic domain. The active-site O-(3'-phospho-DNA)-tyrosine intermediate is tyrosine 749.

The protein belongs to the type IB topoisomerase family.

The protein resides in the nucleus. It carries out the reaction ATP-independent breakage of single-stranded DNA, followed by passage and rejoining.. In terms of biological role, releases the supercoiling and torsional tension of DNA introduced during the DNA replication and transcription by transiently cleaving and rejoining one strand of the DNA duplex. Introduces a single-strand break via transesterification at a target site in duplex DNA. The scissile phosphodiester is attacked by the catalytic tyrosine of the enzyme, resulting in the formation of a DNA-(3'-phosphotyrosyl)-enzyme intermediate and the expulsion of a 5'-OH DNA strand. The free DNA strand then rotates around the intact phosphodiester bond on the opposing strand, thus removing DNA supercoils. Finally, in the religation step, the DNA 5'-OH attacks the covalent intermediate to expel the active-site tyrosine and restore the DNA phosphodiester backbone. This is DNA topoisomerase 1 (TOP1) from Daucus carota (Wild carrot).